A 502-amino-acid chain; its full sequence is Phenylalanine--tRNA ligase alpha subunit (502 aa).

Residues Thr-339, 382-384 (QIE), and Tyr-422 each bind L-phenylalanine. Residue Glu-424 participates in Mg(2+) binding. Phe-448 contacts L-phenylalanine.

The protein belongs to the class-II aminoacyl-tRNA synthetase family. Phe-tRNA synthetase alpha subunit type 2 subfamily. Tetramer of two alpha and two beta subunits. It depends on Mg(2+) as a cofactor.

The protein resides in the cytoplasm. It catalyses the reaction tRNA(Phe) + L-phenylalanine + ATP = L-phenylalanyl-tRNA(Phe) + AMP + diphosphate + H(+). The protein is Phenylalanine--tRNA ligase alpha subunit of Halobacterium salinarum (strain ATCC 29341 / DSM 671 / R1).